A 606-amino-acid polypeptide reads, in one-letter code: Leucine-rich repeat and immunoglobulin-like domain-containing nogo receptor-interacting protein 2 (606 aa).

Positions 1-27 (MLHTAISCWQPFLGLAVVLIFMGSTIG) are cleaved as a signal peptide. The 30-residue stretch at 28 to 57 (CPARCECSAQNKSVSCHRRRLIAIPEGIPI) folds into the LRRNT domain. Topologically, residues 28–545 (CPARCECSAQ…LDLKTILVST (518 aa)) are extracellular. N38 is a glycosylation site (N-linked (GlcNAc...) asparagine). LRR repeat units lie at residues 58 to 79 (ETKILDLSKNRLKSVNPEEFIS), 82 to 103 (LLEEIDLSDNIIANVEPGAFNN), 106 to 127 (NLRSLRLKGNRLKLVPLGVFTG), 130 to 151 (NLTKLDISENKIVILLDYMFQD), 154 to 175 (NLKSLEVGDNDLVYISHRAFSG), 178 to 199 (SLEQLTLEKCNLTAVPTEALSH), 202 to 223 (SLISLHLKHLNINNMPVYAFKR), 226 to 247 (HLKHLEIDYWPLLDMMPANSLY), 250 to 271 (NLTSLSVTNTNLSTVPFLAFKH), 274 to 295 (YLTHLNLSYNPISTIEAGMFSD), 298 to 319 (RLQELHIVGAQLRTIEPHSFQG), and 322 to 343 (FLRVLNVSQNLLETLEENVFSS). N-linked (GlcNAc...) asparagine glycosylation occurs at N130. Residue N188 is glycosylated (N-linked (GlcNAc...) asparagine). An N-linked (GlcNAc...) asparagine glycan is attached at N279. The N-linked (GlcNAc...) asparagine glycan is linked to N327. The LRRCT domain maps to 355–409 (NPLACDCRLLWILQRQPTLQFGGQQPMCAGPDTIRERSFKDFHSTALSFYFTCKK). Residues 410–499 (PKIREKKLQH…GNDTFTASLT (90 aa)) form the Ig-like C2-type domain. A disulfide bridge links C432 with C483. A helical membrane pass occupies residues 546–566 (AMGCFTFLGVVLFCFLLLFVW). Over 567 to 606 (SRGKGKHKNSIDLEYVPRKNNGAVVEGEVAGPRRFNMKMI) the chain is Cytoplasmic.

The protein resides in the membrane. In Homo sapiens (Human), this protein is Leucine-rich repeat and immunoglobulin-like domain-containing nogo receptor-interacting protein 2 (LINGO2).